Reading from the N-terminus, the 579-residue chain is Moesin a (579 aa).

The 291-residue stretch at Ile5 to Arg295 folds into the FERM domain. Residues Lys306–Lys448 are a coiled coil. Disordered stretches follow at residues Gln308–Glu341, Glu376–Ala418, and Lys464–Arg519. The span at Glu376–Lys400 shows a compositional bias: basic and acidic residues. The span at Ala490 to Ala501 shows a compositional bias: low complexity. Positions Tyr502 to Arg519 are enriched in basic and acidic residues. Residues Asn517 to Val551 are a coiled coil.

Its subcellular location is the cell membrane. The protein resides in the cell junction. In terms of biological role, positively regulates endothelial adherens junction formation and stabilization. Is thereby required for intersegmental vessel luminal membrane formation and stabilization during tubulogenesis in the early stages of development, independent of blood flow dynamics. The chain is Moesin a from Danio rerio (Zebrafish).